We begin with the raw amino-acid sequence, 196 residues long: Corticoliberin (196 aa).

Residues 1 to 24 (MRLPLLLSAGVLLVVSLPCPPCRA) form the signal peptide. The propeptide occupies 25–153 (LLSRGPIPGA…RQETPERERR (129 aa)). The tract at residues 122-158 (PRRQLDSPAGPAERGEENALGSRQETPERERRSEEPP) is disordered. Residues 146–156 (ETPERERRSEE) show a composition bias toward basic and acidic residues. I194 bears the Isoleucine amide mark.

Belongs to the sauvagine/corticotropin-releasing factor/urotensin I family. As to quaternary structure, interacts (via C-terminus) with CRFR1 (via N-terminal extracellular domain). As to expression, produced by the hypothalamus.

The protein resides in the secreted. Functionally, hormone regulating the release of corticotropin from pituitary gland. Induces NLRP6 in intestinal epithelial cells, hence may influence gut microbiota profile. The protein is Corticoliberin (CRH) of Canis lupus familiaris (Dog).